Here is a 480-residue protein sequence, read N- to C-terminus: Salicylate hydroxylase asL1 (480 aa).

A helical membrane pass occupies residues 17–37; sequence PMEIAIVGGGIVGVILAIGLT. 2 residues coordinate FAD: Glu-47 and Ala-60. Residue Asn-87 is glycosylated (N-linked (GlcNAc...) asparagine). Arg-131 contributes to the FAD binding site. Residue Asn-168 is glycosylated (N-linked (GlcNAc...) asparagine). Active-site residues include Arg-213 and Tyr-246. Asn-250 carries N-linked (GlcNAc...) asparagine glycosylation. FAD-binding residues include Asp-329 and Ala-342. Asn-400 and Asn-464 each carry an N-linked (GlcNAc...) asparagine glycan.

The protein belongs to the paxM FAD-dependent monooxygenase family. FAD serves as cofactor.

The protein localises to the membrane. The protein operates within secondary metabolite biosynthesis; terpenoid biosynthesis. Functionally, salicylate hydroxylase; part of the gene cluster that mediates the biosynthesis of xenovulene A, an unusual meroterpenoid that has potent inhibitory effects on the human gamma-aminobutyrate A (GABAA) benzodiazepine receptor. The first step of xenovulene A biosynthesis is the biosynthesis of 3-methylorcinaldehyde performed by the non-reducing polyketide synthase aspks1. The salicylate hydroxylase asL1 then catalyzes the oxidative dearomatization of 3-methylorcinaldehyde to yield a dearomatized hydroxycyclohexadione. The 2-oxoglutarate-dependent dioxygenase asL3 further catalyzes the oxidative ring expansion to provide the first tropolone metabolite. The cytochrome P450 monooxygenase asR2 allows the synthesis of tropolone hemiacetal. In parallel, a previously unrecognised class of terpene cyclase, asR6, produces alpha-humulene from farnesylpyrophosphate (FPP). The putative Diels-Alderase asR5 probably catalyzes the formation of the tropolone-humulene skeleton by linking humulene and the polyketide moiety. Oxidative-ring contractions catalyzed by asL4 and asL6 then processively remove carbon atoms from the polyketide to yield xenovulene A. This is Salicylate hydroxylase asL1 from Sarocladium schorii (Acremonium strictum (strain IMI 501407)).